A 285-amino-acid polypeptide reads, in one-letter code: Pantothenate synthetase (285 aa).

Residue 30–37 coordinates ATP; the sequence is MGYLHEGH. His-37 functions as the Proton donor in the catalytic mechanism. Position 61 (Gln-61) interacts with (R)-pantoate. Gln-61 is a beta-alanine binding site. 148-151 is an ATP binding site; the sequence is GKKD. Gln-154 is a (R)-pantoate binding site. ATP contacts are provided by residues Val-177 and 185–188; that span reads LSSR.

Belongs to the pantothenate synthetase family. Homodimer.

Its subcellular location is the cytoplasm. The catalysed reaction is (R)-pantoate + beta-alanine + ATP = (R)-pantothenate + AMP + diphosphate + H(+). The protein operates within cofactor biosynthesis; (R)-pantothenate biosynthesis; (R)-pantothenate from (R)-pantoate and beta-alanine: step 1/1. Catalyzes the condensation of pantoate with beta-alanine in an ATP-dependent reaction via a pantoyl-adenylate intermediate. The protein is Pantothenate synthetase of Leptospira interrogans serogroup Icterohaemorrhagiae serovar Lai (strain 56601).